Here is a 285-residue protein sequence, read N- to C-terminus: MTQIIDGKALAAKLQGQLAEKTAKLKEETGLVPGLVVILVGDNPASQVYVRNKERSALAAGFRSEVVRVPETITQEELLDLIAKYNQDPAWHGILVQLPLPKHIDEEAVLLAIDPEKDVDGFHPLNMGRLWSGHPVMIPSTPAGIMEMFHEYGIDLEGKNAVVIGRSNIVGKPMAQLLLAKNATVTLTHSRTHNLSKVAAKADILVVAIGRAKFVTADFVKPGAVVIDVGMNRDENGKLCGDVDYEAVAPLASHITPVPGGVGPMTITMLMEQTYQAALRTLDRK.

Residues 165–167 and Ser-190 contribute to the NADP(+) site; that span reads GRS.

This sequence belongs to the tetrahydrofolate dehydrogenase/cyclohydrolase family. As to quaternary structure, homodimer.

It catalyses the reaction (6R)-5,10-methylene-5,6,7,8-tetrahydrofolate + NADP(+) = (6R)-5,10-methenyltetrahydrofolate + NADPH. It carries out the reaction (6R)-5,10-methenyltetrahydrofolate + H2O = (6R)-10-formyltetrahydrofolate + H(+). It functions in the pathway one-carbon metabolism; tetrahydrofolate interconversion. Functionally, catalyzes the oxidation of 5,10-methylenetetrahydrofolate to 5,10-methenyltetrahydrofolate and then the hydrolysis of 5,10-methenyltetrahydrofolate to 10-formyltetrahydrofolate. This is Bifunctional protein FolD from Streptococcus pneumoniae serotype 4 (strain ATCC BAA-334 / TIGR4).